A 584-amino-acid chain; its full sequence is 65 kDa membrane protein (584 aa).

The N-terminal stretch at 1 to 30 (MKFKSLITTTLALGVLASTGANFNNNEASA) is a signal peptide. MAP repeat units lie at residues 45–154 (GYSK…EDKK), 156–265 (DKAN…ENKA), 266–374 (KRNY…KADR), 375–474 (YVPY…TGTK), and 475–584 (AKAD…KKNK).

The protein localises to the cell membrane. In terms of biological role, binds various plasma and ECM-proteins. The protein is 65 kDa membrane protein of Staphylococcus aureus (strain Newman).